The sequence spans 472 residues: Chromosomal replication initiator protein DnaA (472 aa).

The tract at residues 1-73 is domain I, interacts with DnaA modulators; that stretch reads MSNMEHDRWS…LTCWQAEMPE (73 aa). The domain II stretch occupies residues 73 to 128; the sequence is EVCRIDLTVRSPMRAAVTKEAPAPAEHRRDEHRPAADARSHAAAPAPSNHDALGGS. Residues 89–127 form a disordered region; it reads VTKEAPAPAEHRRDEHRPAADARSHAAAPAPSNHDALGG. Residues 97–112 are compositionally biased toward basic and acidic residues; it reads AEHRRDEHRPAADARS. Residues 113 to 124 are compositionally biased toward low complexity; sequence HAAAPAPSNHDA. Positions 129–351 are domain III, AAA+ region; the sequence is PLDPRLTFAS…GAINRLLAHS (223 aa). G176, G178, K179, and T180 together coordinate ATP. The segment at 352-472 is domain IV, binds dsDNA; that stretch reads KLNAQPVTLE…VESLKRQLQE (121 aa).

It belongs to the DnaA family. Oligomerizes as a right-handed, spiral filament on DNA at oriC.

The protein resides in the cytoplasm. Functionally, plays an essential role in the initiation and regulation of chromosomal replication. ATP-DnaA binds to the origin of replication (oriC) to initiate formation of the DNA replication initiation complex once per cell cycle. Binds the DnaA box (a 9 base pair repeat at the origin) and separates the double-stranded (ds)DNA. Forms a right-handed helical filament on oriC DNA; dsDNA binds to the exterior of the filament while single-stranded (ss)DNA is stabiized in the filament's interior. The ATP-DnaA-oriC complex binds and stabilizes one strand of the AT-rich DNA unwinding element (DUE), permitting loading of DNA polymerase. After initiation quickly degrades to an ADP-DnaA complex that is not apt for DNA replication. Binds acidic phospholipids. The polypeptide is Chromosomal replication initiator protein DnaA (Rhodopseudomonas palustris (strain BisB5)).